An 800-amino-acid polypeptide reads, in one-letter code: Transducin beta-like protein 3 (800 aa).

Ala2 carries the N-acetylalanine modification. WD repeat units lie at residues 64-105 (EDQE…RLWK), 107-146 (IHTA…GTHH), 149-190 (GSPG…CLAV), 193-232 (AHYS…ATRT), 245-284 (LPEE…CVHA), 290-329 (GPGR…LRKQ), 332-372 (GYSE…CQIL), 374-413 (GHTD…EVAC), 419-459 (GHTH…LSKG), 477-516 (CHDK…LLGT), 519-560 (GHRR…KTFE), 562-602 (HDAS…RTLD), and 604-642 (HEDK…EQAE). At Ser257 the chain carries Phosphoserine. Residue Lys407 forms a Glycyl lysine isopeptide (Lys-Gly) (interchain with G-Cter in SUMO2) linkage.

Part of the small subunit (SSU) processome, composed of more than 70 proteins and the RNA chaperone small nucleolar RNA (snoRNA) U3.

It is found in the nucleus. The protein localises to the nucleolus. Functionally, part of the small subunit (SSU) processome, first precursor of the small eukaryotic ribosomal subunit. During the assembly of the SSU processome in the nucleolus, many ribosome biogenesis factors, an RNA chaperone and ribosomal proteins associate with the nascent pre-rRNA and work in concert to generate RNA folding, modifications, rearrangements and cleavage as well as targeted degradation of pre-ribosomal RNA by the RNA exosome. The polypeptide is Transducin beta-like protein 3 (TBL3) (Bos taurus (Bovine)).